The following is a 282-amino-acid chain: D-alanine aminotransferase (282 aa).

Residue Y32 coordinates substrate. Residue R51 participates in pyridoxal 5'-phosphate binding. Positions 99 and 101 each coordinate substrate. K146 acts as the Proton acceptor in catalysis. Position 146 is an N6-(pyridoxal phosphate)lysine (K146). Pyridoxal 5'-phosphate is bound at residue E178.

The protein belongs to the class-IV pyridoxal-phosphate-dependent aminotransferase family. As to quaternary structure, homodimer. The cofactor is pyridoxal 5'-phosphate.

It carries out the reaction D-alanine + 2-oxoglutarate = D-glutamate + pyruvate. Functionally, acts on the D-isomers of alanine, leucine, aspartate, glutamate, aminobutyrate, norvaline and asparagine. The enzyme transfers an amino group from a substrate D-amino acid to the pyridoxal phosphate cofactor to form pyridoxamine and an alpha-keto acid in the first half-reaction. The second half-reaction is the reverse of the first, transferring the amino group from the pyridoxamine to a second alpha-keto acid to form the product D-amino acid via a ping-pong mechanism. This is an important process in the formation of D-alanine and D-glutamate, which are essential bacterial cell wall components. This Staphylococcus aureus (strain MSSA476) protein is D-alanine aminotransferase (dat).